We begin with the raw amino-acid sequence, 305 residues long: MNMQEVYEYLSTVLPEGHVKQDEMLKNHTHIKVGGKADVFVAPTNYDEIQEVIKYANKYNIPVTFLGNGSNVIIKDGGIRGITVSLIHITGVTVTGTTIVAQCGAAIIDVSRIALEHNLTGLEFACGIPGSVGGALYMNAGAYGGEISYVLTEAVVMTGDGELRTLTKEAFEFGYRKSVFANNHYIILEARFELEEGVYEEIKAKMDDLTFKRESKQPLEYPSCGSVFKRPPNNFAGKLIQESGLQGKRIGGVEVSLKHAGFMVNVDNGTAQDYIDLIHFVQKTVEEKFGVKLEREVRIIGEDKE.

Positions 33-197 constitute an FAD-binding PCMH-type domain; it reads VGGKADVFVA…LEARFELEEG (165 aa). The active site involves Arg-176. The active-site Proton donor is Ser-226. The active site involves Glu-296.

It belongs to the MurB family. Requires FAD as cofactor.

It is found in the cytoplasm. It catalyses the reaction UDP-N-acetyl-alpha-D-muramate + NADP(+) = UDP-N-acetyl-3-O-(1-carboxyvinyl)-alpha-D-glucosamine + NADPH + H(+). It participates in cell wall biogenesis; peptidoglycan biosynthesis. Functionally, cell wall formation. The polypeptide is UDP-N-acetylenolpyruvoylglucosamine reductase 2 (Bacillus cereus (strain ATCC 10987 / NRS 248)).